Reading from the N-terminus, the 219-residue chain is Sugar fermentation stimulation protein homolog (219 aa).

The protein belongs to the SfsA family.

This Archaeoglobus fulgidus (strain ATCC 49558 / DSM 4304 / JCM 9628 / NBRC 100126 / VC-16) protein is Sugar fermentation stimulation protein homolog.